A 350-amino-acid chain; its full sequence is Protein O-mannose kinase (350 aa).

The residue at position 1 (methionine 1) is an N-acetylmethionine. At 1-20 (MEKQPQNKRRGLAPREVPPA) the chain is on the cytoplasmic side. A helical; Signal-anchor for type II membrane protein membrane pass occupies residues 21–43 (VGLLLIMALMNTLLYLCLDHFFI). The Lumenal segment spans residues 44 to 350 (APRQSIVDPR…AVMSQAREML (307 aa)). The Protein kinase domain occupies 81–350 (VRQLKRVGEG…AVMSQAREML (270 aa)). N-linked (GlcNAc...) asparagine glycans are attached at residues asparagine 165, asparagine 220, and asparagine 235.

Belongs to the protein kinase superfamily. Ser/Thr protein kinase family. STKL subfamily.

Its subcellular location is the endoplasmic reticulum membrane. It catalyses the reaction 3-O-[beta-D-GalNAc-(1-&gt;3)-beta-D-GlcNAc-(1-&gt;4)-alpha-D-Man]-L-Thr-[protein] + ATP = 3-O-[beta-D-GalNAc-(1-&gt;3)-beta-D-GlcNAc-(1-&gt;4)-(O-6-P-alpha-D-Man)]-Thr-[protein] + ADP + H(+). Its function is as follows. Protein O-mannose kinase that specifically mediates phosphorylation at the 6-position of an O-mannose of the trisaccharide (N-acetylgalactosamine (GalNAc)-beta-1,3-N-acetylglucosamine (GlcNAc)-beta-1,4-mannose) to generate phosphorylated O-mannosyl trisaccharide (N-acetylgalactosamine-beta-1,3-N-acetylglucosamine-beta-1,4-(phosphate-6-)mannose). Phosphorylated O-mannosyl trisaccharide is a carbohydrate structure present in alpha-dystroglycan (DAG1), which is required for binding laminin G-like domain-containing extracellular proteins with high affinity. Only shows kinase activity when the GalNAc-beta-3-GlcNAc-beta-terminus is linked to the 4-position of O-mannose, suggesting that this disaccharide serves as the substrate recognition motif. In Macaca fascicularis (Crab-eating macaque), this protein is Protein O-mannose kinase (POMK).